We begin with the raw amino-acid sequence, 197 residues long: Peptidyl-tRNA hydrolase (197 aa).

Residue tyrosine 18 coordinates tRNA. Histidine 23 functions as the Proton acceptor in the catalytic mechanism. Residues phenylalanine 69, asparagine 71, and asparagine 117 each contribute to the tRNA site.

It belongs to the PTH family. In terms of assembly, monomer.

It is found in the cytoplasm. It catalyses the reaction an N-acyl-L-alpha-aminoacyl-tRNA + H2O = an N-acyl-L-amino acid + a tRNA + H(+). Hydrolyzes ribosome-free peptidyl-tRNAs (with 1 or more amino acids incorporated), which drop off the ribosome during protein synthesis, or as a result of ribosome stalling. Functionally, catalyzes the release of premature peptidyl moieties from peptidyl-tRNA molecules trapped in stalled 50S ribosomal subunits, and thus maintains levels of free tRNAs and 50S ribosomes. The protein is Peptidyl-tRNA hydrolase of Psychromonas ingrahamii (strain DSM 17664 / CCUG 51855 / 37).